Reading from the N-terminus, the 45-residue chain is Small polypeptide DEVIL 2 (45 aa).

The segment at 14–45 (SQSRRLGKYLKEQKGRIYIIRRCVMMLLCSHD) is required for DVL/RTFL small polypeptide activity. Residues 17–33 (RRLGKYLKEQKGRIYII) form a helical membrane-spanning segment.

This sequence belongs to the DVL/RTFL small polypeptides family. As to expression, mostly expressed in stems and, to a lower extent, in roots and leaves.

The protein localises to the cell membrane. Small polypeptide acting as a regulatory molecule which coordinates cellular responses required for differentiation, growth and development, including leaves shape, pedicule elongation, inflorescence organization and fruit maturation, probably by restricting polar cell proliferation in lateral organs and coordinating socket cell recruitment and differentiation at trichome sites. This Arabidopsis thaliana (Mouse-ear cress) protein is Small polypeptide DEVIL 2.